A 272-amino-acid chain; its full sequence is Insulin-like growth factor-binding protein 1 (272 aa).

Residues 1–25 (MPEVPAAGLWPFLLLLAVQVSTVAS) form the signal peptide. An IGFBP N-terminal domain is found at 28 to 109 (QPWHCAPCSA…TRGQGACVPE (82 aa)). 5 disulfide bridges follow: Cys32–Cys59, Cys35–Cys61, Cys43–Cys62, Cys50–Cys65, and Cys73–Cys86. 3 positions are modified to phosphoserine: Ser139, Ser157, and Ser169. Thr170 is subject to Phosphothreonine. At Tyr171 the chain carries Phosphotyrosine. The region spanning 186–264 (KQPCRRELYK…SLEIRGDPNC (79 aa)) is the Thyroglobulin type-1 domain. 3 disulfide bridges follow: Cys189-Cys219, Cys230-Cys241, and Cys243-Cys264. Ser255 bears the Phosphoserine mark. Residues 259–261 (RGD) carry the Cell attachment site motif.

In terms of assembly, binds equally well IGF1 and IGF2. Interacts with integrin ITGA5:ITGB1. Interacts with VHL; this interaction inhibits HIF1A degradation.

It localises to the secreted. Functionally, multifunctional protein that plays a critical role in regulating the availability of IGFs such as IGF1 and IGF2 to their receptors and thereby regulates IGF-mediated cellular processes including cell migration, proliferation, differentiation or apoptosis in a cell-type specific manner. Also plays a positive role in cell migration by interacting with integrin ITGA5:ITGB1 through its RGD motif. Mechanistically, binding to integrins leads to activation of focal adhesion kinase/PTK2 and stimulation of the mitogen-activated protein kinase (MAPK) pathway. Regulates cardiomyocyte apoptosis by suppressing HIF-1alpha/HIF1A degradation through ubiquitination. In Ictidomys tridecemlineatus (Thirteen-lined ground squirrel), this protein is Insulin-like growth factor-binding protein 1 (IGFBP1).